A 98-amino-acid chain; its full sequence is Cell cycle protein GpsB (98 aa).

A coiled-coil region spans residues 34–71 (LDIVIKDYEAFQQELDELRQENARLKRQVEELQKRPTT).

This sequence belongs to the GpsB family. In terms of assembly, forms polymers through the coiled coil domains. Interacts with PBP1, MreC and EzrA.

The protein localises to the cytoplasm. In terms of biological role, divisome component that associates with the complex late in its assembly, after the Z-ring is formed, and is dependent on DivIC and PBP2B for its recruitment to the divisome. Together with EzrA, is a key component of the system that regulates PBP1 localization during cell cycle progression. Its main role could be the removal of PBP1 from the cell pole after pole maturation is completed. Also contributes to the recruitment of PBP1 to the division complex. Not essential for septum formation. This chain is Cell cycle protein GpsB, found in Geobacillus thermodenitrificans (strain NG80-2).